The primary structure comprises 192 residues: Anthrone oxygenase (192 aa).

3 helical membrane-spanning segments follow: residues 12–32 (IVTGSFLSGAMITLSTITVPV), 54–74 (GHISLPTISIATAILYFYIAA), and 86–106 (AALVGFLTIVMVPFTWIVMSS). N-linked (GlcNAc...) asparagine glycosylation is found at Asn130, Asn138, and Asn147. The helical transmembrane segment at 172 to 192 (MHLVRSLFPLMAAVLGVGICV) threads the bilayer.

It belongs to the anthrone oxygenase family.

The protein localises to the membrane. It carries out the reaction emodin anthrone + O2 = emodin + H2O + H(+). Its pathway is secondary metabolite biosynthesis. Anthrone oxygenase; part of the gene cluster that mediates the biosynthesis of monodictyphenone, a prenyl xanthone derivative. The pathway begins with the synthesis of atrochrysone thioester by the polyketide synthase (PKS) mdpG. The atrochrysone carboxyl ACP thioesterase mdpF then breaks the thioester bond and releases the atrochrysone carboxylic acid from mdpG. The atrochrysone carboxylic acid is then converted to atrochrysone which is further transformed into emodin anthrone by mdpH-1 and mdpH-2. Emodin is further modified to yield monodictyphenone via several steps involving mdpB, mdpC mdpJ, mdpK and mdpL. These enzymes with xptA, xptB and xptC are also proposed to be involved in the synthesis of shamixanthone from emodin. Especially, direct reduction of emodin by the short chain dehydrogenase mdpC followed by dehydration catalyzed by the scytalone dehydratase-like protein mdpB gives loss of oxygen and formation of chrysophanol intermediate in two simple steps. The sequence is that of Anthrone oxygenase from Emericella nidulans (strain FGSC A4 / ATCC 38163 / CBS 112.46 / NRRL 194 / M139) (Aspergillus nidulans).